Here is a 290-residue protein sequence, read N- to C-terminus: Light-independent protochlorophyllide reductase iron-sulfur ATP-binding protein (290 aa).

ATP is bound by residues 10-15 (GIGKST) and Lys39. A Mg(2+)-binding site is contributed by Ser14. 2 residues coordinate [4Fe-4S] cluster: Cys95 and Cys129. Residue 180–181 (NR) participates in ATP binding.

The protein belongs to the NifH/BchL/ChlL family. Homodimer. Protochlorophyllide reductase is composed of three subunits; ChlL, ChlN and ChlB. [4Fe-4S] cluster is required as a cofactor.

It localises to the plastid. It is found in the chloroplast. It catalyses the reaction chlorophyllide a + oxidized 2[4Fe-4S]-[ferredoxin] + 2 ADP + 2 phosphate = protochlorophyllide a + reduced 2[4Fe-4S]-[ferredoxin] + 2 ATP + 2 H2O. Its pathway is porphyrin-containing compound metabolism; chlorophyll biosynthesis (light-independent). In terms of biological role, component of the dark-operative protochlorophyllide reductase (DPOR) that uses Mg-ATP and reduced ferredoxin to reduce ring D of protochlorophyllide (Pchlide) to form chlorophyllide a (Chlide). This reaction is light-independent. The L component serves as a unique electron donor to the NB-component of the complex, and binds Mg-ATP. The polypeptide is Light-independent protochlorophyllide reductase iron-sulfur ATP-binding protein (Angiopteris evecta (Mule's foot fern)).